A 405-amino-acid polypeptide reads, in one-letter code: Probable tRNA sulfurtransferase (405 aa).

The 106-residue stretch at 60 to 165 (TEVDKRLKKV…QDAVYISNQL (106 aa)) folds into the THUMP domain. Residues 183 to 184 (ML), 208 to 209 (HF), Arg-265, Gly-287, and Gln-296 contribute to the ATP site.

The protein belongs to the ThiI family.

It localises to the cytoplasm. It carries out the reaction [ThiI sulfur-carrier protein]-S-sulfanyl-L-cysteine + a uridine in tRNA + 2 reduced [2Fe-2S]-[ferredoxin] + ATP + H(+) = [ThiI sulfur-carrier protein]-L-cysteine + a 4-thiouridine in tRNA + 2 oxidized [2Fe-2S]-[ferredoxin] + AMP + diphosphate. It catalyses the reaction [ThiS sulfur-carrier protein]-C-terminal Gly-Gly-AMP + S-sulfanyl-L-cysteinyl-[cysteine desulfurase] + AH2 = [ThiS sulfur-carrier protein]-C-terminal-Gly-aminoethanethioate + L-cysteinyl-[cysteine desulfurase] + A + AMP + 2 H(+). Its pathway is cofactor biosynthesis; thiamine diphosphate biosynthesis. In terms of biological role, catalyzes the ATP-dependent transfer of a sulfur to tRNA to produce 4-thiouridine in position 8 of tRNAs, which functions as a near-UV photosensor. Also catalyzes the transfer of sulfur to the sulfur carrier protein ThiS, forming ThiS-thiocarboxylate. This is a step in the synthesis of thiazole, in the thiamine biosynthesis pathway. The sulfur is donated as persulfide by IscS. The protein is Probable tRNA sulfurtransferase of Lactobacillus acidophilus (strain ATCC 700396 / NCK56 / N2 / NCFM).